The following is a 219-amino-acid chain: Eukaryotic translation initiation factor 3 subunit K (219 aa).

The PCI domain maps to 43 to 205; that stretch reads YDLEANLAVL…SVKPKNIVEK (163 aa).

This sequence belongs to the eIF-3 subunit K family. As to quaternary structure, component of the eukaryotic translation initiation factor 3 (eIF-3) complex, which is composed of 13 subunits: eif3a, eif3b, eif3c, eif3d, eif3e, eif3f, eif3g, eif3h, eif3i, eif3j, eif3k, eif3l and eif3m.

It is found in the nucleus. The protein localises to the cytoplasm. In terms of biological role, component of the eukaryotic translation initiation factor 3 (eIF-3) complex, which is involved in protein synthesis of a specialized repertoire of mRNAs and, together with other initiation factors, stimulates binding of mRNA and methionyl-tRNAi to the 40S ribosome. The eIF-3 complex specifically targets and initiates translation of a subset of mRNAs involved in cell proliferation. This Danio rerio (Zebrafish) protein is Eukaryotic translation initiation factor 3 subunit K (eif3k).